Here is a 945-residue protein sequence, read N- to C-terminus: Isoleucine--tRNA ligase (945 aa).

The 'HIGH' region signature appears at 66 to 76; the sequence is PYANGDIHLGH. E581 serves as a coordination point for L-isoleucyl-5'-AMP. Residues 622–626 carry the 'KMSKS' region motif; the sequence is KMSKS. K625 is a binding site for ATP. Positions 908, 911, 928, and 931 each coordinate Zn(2+).

The protein belongs to the class-I aminoacyl-tRNA synthetase family. IleS type 1 subfamily. As to quaternary structure, monomer. Zn(2+) serves as cofactor.

Its subcellular location is the cytoplasm. The enzyme catalyses tRNA(Ile) + L-isoleucine + ATP = L-isoleucyl-tRNA(Ile) + AMP + diphosphate. Catalyzes the attachment of isoleucine to tRNA(Ile). As IleRS can inadvertently accommodate and process structurally similar amino acids such as valine, to avoid such errors it has two additional distinct tRNA(Ile)-dependent editing activities. One activity is designated as 'pretransfer' editing and involves the hydrolysis of activated Val-AMP. The other activity is designated 'posttransfer' editing and involves deacylation of mischarged Val-tRNA(Ile). The chain is Isoleucine--tRNA ligase from Burkholderia cenocepacia (strain ATCC BAA-245 / DSM 16553 / LMG 16656 / NCTC 13227 / J2315 / CF5610) (Burkholderia cepacia (strain J2315)).